The following is a 284-amino-acid chain: NAD kinase (284 aa).

Residue D60 is the Proton acceptor of the active site. Residues 60–61, 134–135, R145, K162, D164, 175–180, and Q234 each bind NAD(+); these read DG, NE, and TAYSFS.

The protein belongs to the NAD kinase family. Requires a divalent metal cation as cofactor.

It localises to the cytoplasm. The catalysed reaction is NAD(+) + ATP = ADP + NADP(+) + H(+). Involved in the regulation of the intracellular balance of NAD and NADP, and is a key enzyme in the biosynthesis of NADP. Catalyzes specifically the phosphorylation on 2'-hydroxyl of the adenosine moiety of NAD to yield NADP. The protein is NAD kinase of Clostridium botulinum (strain Alaska E43 / Type E3).